A 299-amino-acid polypeptide reads, in one-letter code: 4-diphosphocytidyl-2-C-methyl-D-erythritol kinase (299 aa).

Residue Lys22 is part of the active site. Residue 108–118 participates in ATP binding; it reads PVGAGLGGGSS. The active site involves Asp150.

The protein belongs to the GHMP kinase family. IspE subfamily.

It catalyses the reaction 4-CDP-2-C-methyl-D-erythritol + ATP = 4-CDP-2-C-methyl-D-erythritol 2-phosphate + ADP + H(+). It functions in the pathway isoprenoid biosynthesis; isopentenyl diphosphate biosynthesis via DXP pathway; isopentenyl diphosphate from 1-deoxy-D-xylulose 5-phosphate: step 3/6. In terms of biological role, catalyzes the phosphorylation of the position 2 hydroxy group of 4-diphosphocytidyl-2C-methyl-D-erythritol. This Desulfotalea psychrophila (strain LSv54 / DSM 12343) protein is 4-diphosphocytidyl-2-C-methyl-D-erythritol kinase.